Reading from the N-terminus, the 166-residue chain is Thioredoxin, mitochondrial (166 aa).

The N-terminal 59 residues, Met-1–Leu-59, are a transit peptide targeting the mitochondrion. The 106-residue stretch at Thr-61–Gly-166 folds into the Thioredoxin domain. Catalysis depends on nucleophile residues Cys-90 and Cys-93. Cys-90 and Cys-93 are joined by a disulfide. Lys-152 carries the N6-acetyllysine; alternate modification. Lys-152 is modified (N6-succinyllysine; alternate).

The protein belongs to the thioredoxin family. As to quaternary structure, monomer.

Its subcellular location is the mitochondrion. Functionally, important for the control of mitochondrial reactive oxygen species homeostasis, apoptosis regulation and cell viability. Is involved in various redox reactions including the reduction of protein disulfide bonds, through the reversible oxidation of its active center dithiol to a disulfide. This chain is Thioredoxin, mitochondrial (Txn2), found in Mus musculus (Mouse).